A 429-amino-acid polypeptide reads, in one-letter code: Gap junction gamma-2 protein (429 aa).

Residues 1 to 25 (MTNMSWSFLTRLLEEIHNHSTFVGK) lie on the Cytoplasmic side of the membrane. Residues 26-46 (VWLTVLVVFRIVLTAVGGESI) form a helical membrane-spanning segment. The Extracellular segment spans residues 47-78 (YSDEQTKFTCNTRQPGCDNVCYDAFAPLSHVR). Residues 79–99 (FWVFQIVVISTPSVMYLGYAV) form a helical membrane-spanning segment. The Cytoplasmic segment spans residues 100-214 (HRLARASQDE…EGLMRVYVAQ (115 aa)). A disordered region spans residues 106–200 (SQDERRRASR…GPAGQHDGRR (95 aa)). A compositionally biased stretch (basic residues) spans 112–123 (RASRRRPSRRAP). The segment covering 124-138 (RPPLPLPPPPHPGWP) has biased composition (pro residues). The segment covering 142-173 (DLGEEEPMLGLGEEDEDPGVAEGLGEDEEAED) has biased composition (acidic residues). Residues 215-235 (LVARAAFEVAFLVGQYLLYGF) traverse the membrane as a helical segment. Topologically, residues 236–263 (EVRPFFACSRQPCPHVVDCFVSRPTEKT) are extracellular. The chain crosses the membrane as a helical span at residues 264-284 (VFLLVMYVVSCLCLLLNLCEM). Residues 285–429 (AHLGLGNAQD…SREGKTTVWI (145 aa)) lie on the Cytoplasmic side of the membrane. 2 disordered regions span residues 296-316 (VRGRRPLPASPGPMPRPPPCA) and 361-429 (LGDL…TVWI). Pro residues predominate over residues 303–316 (PASPGPMPRPPPCA). The residue at position 366 (serine 366) is a Phosphoserine. Low complexity predominate over residues 372–395 (LPANARGPPKPGAPASGSGSATSG).

Belongs to the connexin family. Gamma-type subfamily. A connexon is composed of a hexamer of connexins. Interacts with TJP1.

The protein localises to the cell membrane. It localises to the cell junction. Its subcellular location is the gap junction. One gap junction consists of a cluster of closely packed pairs of transmembrane channels, the connexons, through which materials of low MW diffuse from one cell to a neighboring cell. May play a role in myelination in central and peripheral nervous systems. The protein is Gap junction gamma-2 protein (GJC2) of Bos taurus (Bovine).